The following is a 249-amino-acid chain: Segregation and condensation protein A (249 aa).

It belongs to the ScpA family. Component of a cohesin-like complex composed of ScpA, ScpB and the Smc homodimer, in which ScpA and ScpB bind to the head domain of Smc. The presence of the three proteins is required for the association of the complex with DNA.

It localises to the cytoplasm. Functionally, participates in chromosomal partition during cell division. May act via the formation of a condensin-like complex containing Smc and ScpB that pull DNA away from mid-cell into both cell halves. This Clostridium acetobutylicum (strain ATCC 824 / DSM 792 / JCM 1419 / IAM 19013 / LMG 5710 / NBRC 13948 / NRRL B-527 / VKM B-1787 / 2291 / W) protein is Segregation and condensation protein A.